The sequence spans 135 residues: MACGLVASNLNLKPGECLKVRGELAPDAKSFVLNLGKDSNNLCLHFNPRFNAHGDANTIVCNSKDDGTWGTEQRETAFPFQPGSITEVCITFDQADLTIKLPDGHEFKFPNRLNMEAINYMAADGDFKIKCVAFE.

At Ala-2 the chain carries N-acetylalanine. One can recognise a Galectin domain in the interval 4–135; it reads GLVASNLNLK…DFKIKCVAFE (132 aa). 3 positions are modified to N6-acetyllysine: Lys-13, Lys-19, and Lys-29. At Ser-30 the chain carries Phosphoserine. A beta-D-galactoside is bound by residues 45–49, His-53, Asn-62, and 69–72; these read HFNPR and WGTE. Lys-108 carries the N6-acetyllysine; alternate modification. Lys-108 is modified (N6-succinyllysine; alternate). The residue at position 128 (Lys-128) is an N6-acetyllysine.

Homodimer. Binds LGALS3BP. Interacts with CD2, CD3, CD4, CD6, CD7, CD43, ALCAM and CD45. Interacts with laminin (via poly-N-acetyllactosamine). Interacts with SUSD2. Interacts with cargo receptor TMED10; the interaction mediates the translocation from the cytoplasm into the ERGIC (endoplasmic reticulum-Golgi intermediate compartment) and thereby secretion. Interacts with CD69.

The protein resides in the secreted. It localises to the extracellular space. It is found in the extracellular matrix. The protein localises to the cytoplasm. Functionally, lectin that binds beta-galactoside and a wide array of complex carbohydrates. Plays a role in regulating apoptosis, cell proliferation and cell differentiation. Inhibits CD45 protein phosphatase activity and therefore the dephosphorylation of Lyn kinase. Strong inducer of T-cell apoptosis. Plays a negative role in Th17 cell differentiation via activation of the receptor CD69. This is Galectin-1 (Lgals1) from Rattus norvegicus (Rat).